We begin with the raw amino-acid sequence, 306 residues long: Replication termination factor 2 (306 aa).

A disordered region spans residues 193–276 (AKLEKKTKKP…RSIADSEESE (84 aa)). Basic and acidic residues predominate over residues 226–240 (GKPEEASLDSREKKT). A compositionally biased stretch (polar residues) spans 243 to 255 (APKSTAMNESSSG). Serine 287 is subject to Phosphoserine.

It belongs to the rtf2 family. In terms of assembly, interacts with DDI2; probably also interacts with DDI1. Post-translationally, undergoes proteasomal degradation, via DDI1 and DDI2. Removal from stalled replisomes and degradation are required for genome stability.

Its subcellular location is the chromosome. Replication termination factor which is a component of the elongating replisome. Required for ATR pathway signaling upon DNA damage and has a positive activity during DNA replication. Might function to facilitate fork pausing at replication fork barriers like the rDNA. May be globally required to stimulate ATR signaling after the fork stalls or encounters a lesion. Interacts with nascent DNA. The sequence is that of Replication termination factor 2 from Homo sapiens (Human).